Consider the following 238-residue polypeptide: Type III secretion protein hrcQa (238 aa).

Residues 66–238 (DAEALLSLLG…SHEEHSHHEY (173 aa)) are hrcQa-C.

Interacts with hrcQb.

Its subcellular location is the cell inner membrane. In terms of biological role, component of the type III secretion system, which is required for effector protein delivery, parasitism, and pathogenicity. Probably participates in the formation of a C-ring-like assembly along with hrcQb. This chain is Type III secretion protein hrcQa (hrcQa), found in Pseudomonas syringae pv. syringae.